The chain runs to 1331 residues: MEGGGGSGGGGGPVPAEAPEEAGEPPQGRLPPGPEGAAGLAEPESTGDAAGGEAEGGRGPRRALRAVYVRSESSQGAAAGGGPEAGALKCLLRACEAEGAHLTSVPFGELDFGETAVLDAFYDADVAIVDMSDISRQPSLFYHLGVRESFDMANNVILYYDTDADTALSLKDMVTQKNTASSGNYYFIPYTVTPCADYFCCESDAQRRASEYMQPNWDTILGPLCMPLVDRFTSLLKDIRVTSCAYYKETLLNDIRKAREKYQGDELAKELTRIKFRMDNIEVLTSDIIINLLLSYRDIQDYDAMVKLVETLKMLPTCDLADQHNIKFHYAFALNRRNSTGDREKALQVMLQVLQSCDHPAPDMFCLCGRIYKDIFLDSGCEEDASRDSAIEWYRKGFELQSSLYSGINLAVLLIVSGQQFETSMELRKIGVRLNSLLGRKGSLEKMNNYWDVGQFFTVSMLASDIGKAVQAAERLFKLKPPVWYLRSLVQNLLLIQRFKKPITEHSPRQERLNFWLDIIFEATNEVTNGLRFPVLVIEPTKVYQPSYVSINNEAEERTVSLWHVSPTEMKQIHEWNFTASSIKGISLSKFDERCCFLYVHDNSDDFQIYFSTEDQCNRFCSLVKEMLNNGVGSTVELEGEADGDTLEYEYDHDANGERVVLGKGSYGIVYAGRDLSNQVRIAIKEIPERDIRYSQPLHEEIALHKYLKHRNIVQYLGSVSENGYIKIFMEQVPGGSLSALLRSKWGPMKEPTIKFYTKQILEGLKYLHENQIVHRDIKGDNVLVNTYSGVVKISDFGTSKRLAGINPCTETFTGTLQYMAPEIIDQGPRGYGAPADIWSLGCTIIEMATSRPPFHELGEPQAAMFKVGMFKIHPEIPEALSAEARAFILSCFEPDPQKRVTAADLLQEGFLRQVNKGKKNRIAFKPSEGVRSGTGTLALPSSGELVGSSSSEHGSISPDSDAQPDAFFEKVQVPKHQLSHLLSVPDESPALDDRSTALPPEERDPGLFLLRKDSERRAILYRILWEEQNQVASNLQECVVQSSEELLLSVSHIKQIIGILRDFIRSPEHRVMAATISKLKVDLDFDSSSINQIHLILFGFQDAVNRILRNHLIRPHWMFAMDNIIRRAVQAAVTILIPELQAHFEPASETEGVDKDTEVEGDYPLVDLLSQEVHVTPRGTRPGSVAIQEGQPHQQDPSLQLSKLRQETNRLWEHLVQKEREYQNLLRLILDQKTQELYHLQLQYKSNGGTENPPPPDGLGTDRELIDWLQLQGVDANTIEKIVEEDYTLSDILNDITKEDLRCLRLRGGVLCRLWHAVSQHRRQMQESSQ.

Positions 1-13 (MEGGGGSGGGGGP) are enriched in gly residues. The disordered stretch occupies residues 1 to 61 (MEGGGGSGGG…GEAEGGRGPR (61 aa)). Residues 656-912 (NGERVVLGKG…AADLLQEGFL (257 aa)) enclose the Protein kinase domain. ATP-binding positions include 662–670 (LGKGSYGIV) and Lys685. Catalysis depends on Asp777, which acts as the Proton acceptor. 2 disordered regions span residues 934-964 (GTGT…SDAQ) and 983-1005 (LSVP…EERD). The segment covering 940–962 (LPSSGELVGSSSSEHGSISPDSD) has biased composition (low complexity). Residues 992-1005 (LDDRSTALPPEERD) are compositionally biased toward basic and acidic residues. The stretch at 1216-1236 (LVQKEREYQNLLRLILDQKTQ) forms a coiled coil.

It belongs to the protein kinase superfamily. STE Ser/Thr protein kinase family. MAP kinase kinase kinase subfamily. Requires Mg(2+) as cofactor.

It catalyses the reaction L-seryl-[protein] + ATP = O-phospho-L-seryl-[protein] + ADP + H(+). The enzyme catalyses L-threonyl-[protein] + ATP = O-phospho-L-threonyl-[protein] + ADP + H(+). Its activity is regulated as follows. Contains an N-terminal autoinhibitory domain. Activated by phosphorylation at Thr-816, inhibited by phosphorylation at Ser-928. Functionally, serine/threonine kinase which acts as a component of the MAP kinase signal transduction pathway. Once activated, acts as an upstream activator of the p38 MAPK signal transduction cascade through the phosphorylation and activation of several MAP kinase kinases. May function in a signal transduction pathway that is activated by various cell stresses and leads to apoptosis. Involved in phosphorylation of WNK4 in response to osmotic stress or hypotonic low-chloride stimulation via the p38 MAPK signal transduction cascade. This Mus musculus (Mouse) protein is Mitogen-activated protein kinase kinase kinase 15.